The following is a 123-amino-acid chain: uncharacterized protein (123 aa).

A run of 2 helical transmembrane segments spans residues 55-77 and 92-114; these read LLIH…STIL and FFIN…TIVY.

The protein resides in the cell membrane. This is an uncharacterized protein from Pasteurella multocida (strain Pm70).